A 638-amino-acid chain; its full sequence is Phosphomethylpyrimidine synthase (638 aa).

Residues Asn-235, Met-264, Tyr-293, His-329, 349 to 351 (SRG), 390 to 393 (DGLR), and Glu-429 each bind substrate. His-433 lines the Zn(2+) pocket. Tyr-456 is a binding site for substrate. Residue His-497 participates in Zn(2+) binding. 3 residues coordinate [4Fe-4S] cluster: Cys-577, Cys-580, and Cys-585.

The protein belongs to the ThiC family. Homodimer. It depends on [4Fe-4S] cluster as a cofactor.

The catalysed reaction is 5-amino-1-(5-phospho-beta-D-ribosyl)imidazole + S-adenosyl-L-methionine = 4-amino-2-methyl-5-(phosphooxymethyl)pyrimidine + CO + 5'-deoxyadenosine + formate + L-methionine + 3 H(+). Its pathway is cofactor biosynthesis; thiamine diphosphate biosynthesis. Catalyzes the synthesis of the hydroxymethylpyrimidine phosphate (HMP-P) moiety of thiamine from aminoimidazole ribotide (AIR) in a radical S-adenosyl-L-methionine (SAM)-dependent reaction. In Polaromonas naphthalenivorans (strain CJ2), this protein is Phosphomethylpyrimidine synthase.